The chain runs to 237 residues: RNA chaperone ProQ (237 aa).

The interval 106–188 (AKARVQAQRA…QPRPVPVTDI (83 aa)) is disordered. Residues 146 to 158 (PRREAGAAPENRK) show a composition bias toward basic and acidic residues.

This sequence belongs to the ProQ family.

It is found in the cytoplasm. Functionally, RNA chaperone with significant RNA binding, RNA strand exchange and RNA duplexing activities. May regulate ProP activity through an RNA-based, post-transcriptional mechanism. This Yersinia pseudotuberculosis serotype O:1b (strain IP 31758) protein is RNA chaperone ProQ.